Consider the following 126-residue polypeptide: Ribosome-binding factor A (126 aa).

It belongs to the RbfA family. Monomer. Binds 30S ribosomal subunits, but not 50S ribosomal subunits or 70S ribosomes.

It is found in the cytoplasm. In terms of biological role, one of several proteins that assist in the late maturation steps of the functional core of the 30S ribosomal subunit. Associates with free 30S ribosomal subunits (but not with 30S subunits that are part of 70S ribosomes or polysomes). Required for efficient processing of 16S rRNA. May interact with the 5'-terminal helix region of 16S rRNA. This chain is Ribosome-binding factor A, found in Azoarcus sp. (strain BH72).